Here is a 380-residue protein sequence, read N- to C-terminus: Chromo domain-containing protein 2 (380 aa).

Disordered stretches follow at residues 14–58 and 100–156; these read ISES…SLYG and KLSP…VPLN. Positions 33–52 are enriched in polar residues; it reads NSINNKSSTASLESPQNGSW. Acidic residues predominate over residues 108–119; the sequence is EDSEDKKEEDES. Low complexity predominate over residues 121-140; sequence SYKNEFKSSSSASVSSNFEK. The Chromo domain maps to 176–238; the sequence is FAVEMILDSR…SRGGKPDLSS (63 aa). The segment at 250–273 is disordered; the sequence is SNEASYVEKDESSNSDDSISYKRR.

Its subcellular location is the nucleus. Component of the kinetochore which plays a role in stabilizing microtubules and so allowing accurate chromosome segregation. This Schizosaccharomyces pombe (strain 972 / ATCC 24843) (Fission yeast) protein is Chromo domain-containing protein 2 (chp2).